A 1195-amino-acid chain; its full sequence is Zinc finger and BTB domain-containing protein 38 (1195 aa).

A BTB domain is found at 33–100 (CDVTIIVEDT…IYSSTVVVKR (68 aa)). A Glycyl lysine isopeptide (Lys-Gly) (interchain with G-Cter in SUMO2) cross-link involves residue lysine 43. Residue serine 130 is modified to Phosphoserine. Glycyl lysine isopeptide (Lys-Gly) (interchain with G-Cter in SUMO2) cross-links involve residues lysine 145, lysine 148, lysine 151, and lysine 259. A disordered region spans residues 264–334 (RKPKTFSIPQ…QSSDVPGPPA (71 aa)). Positions 270-280 (SIPQDSDSATE) are enriched in polar residues. Residues 300 to 523 (PAAVLTRSKS…RRYQCIFCLE (224 aa)) are interaction with CBFA2T3. Phosphoserine is present on serine 309. Positions 314 to 323 (GDVHFSREDE) are enriched in basic and acidic residues. The segment at 342 to 364 (YNCSCCSKAFDSSTLLSAHMQLH) adopts a C2H2-type 1 zinc-finger fold. The C2H2-type 2; degenerate zinc finger occupies 371-395 (LVCKYCNKQFTTLNRLDRHEQICMR). 3 C2H2-type zinc fingers span residues 460–482 (YSCV…ANVH), 488–510 (YPCH…EIWH), and 516–539 (YQCI…KSFH). Glycyl lysine isopeptide (Lys-Gly) (interchain with G-Cter in SUMO2) cross-links involve residues lysine 550, lysine 557, lysine 754, lysine 758, lysine 763, lysine 804, lysine 814, lysine 821, lysine 842, lysine 850, and lysine 857. Residues 745–804 (SDPAVSQSLKDDSKPEPDKVGRFASRPKSIKEKKKTTSHTRGEIPEESNYVADPGGSLSK) are disordered. The segment covering 753–765 (LKDDSKPEPDKVG) has biased composition (basic and acidic residues). Disordered stretches follow at residues 871-891 (QEEP…PLGL) and 903-922 (FDDA…YYNY). Residues lysine 923, lysine 964, lysine 969, lysine 977, lysine 981, lysine 991, lysine 1017, and lysine 1026 each participate in a glycyl lysine isopeptide (Lys-Gly) (interchain with G-Cter in SUMO2) cross-link. 5 consecutive C2H2-type zinc fingers follow at residues 1010-1032 (YACE…MRCH), 1038-1060 (YQCK…ERIH), 1066-1088 (FVCQ…ERIH), 1094-1116 (YHCQ…EQRH), and 1125-1147 (YACF…QKKH). Glycyl lysine isopeptide (Lys-Gly) (interchain with G-Cter in SUMO2) cross-links involve residues lysine 1109, lysine 1132, lysine 1135, lysine 1150, and lysine 1183.

Interacts with CBFA2T3. Interacts with ZBTB4. Interacts with RBBP6. Ubiquitinated by RBBP6; leading to its degradation by the proteasome.

Its subcellular location is the nucleus. The protein resides in the chromosome. Transcriptional regulator with bimodal DNA-binding specificity. Binds with a higher affinity to methylated CpG dinucleotides in the consensus sequence 5'-CGCG-3' but can also bind to E-box elements (5'-CACGTG-3'). Can also bind specifically to a single methyl-CpG pair. Represses transcription in a methyl-CpG-dependent manner. Plays an important role in regulating DNA replication and common fragile sites (CFS) stability in a RBBP6- and MCM10-dependent manner; represses expression of MCM10 which plays an important role in DNA-replication. Acts as a transcriptional activator. May be involved in the differentiation and/or survival of late postmitotic neurons. In Homo sapiens (Human), this protein is Zinc finger and BTB domain-containing protein 38.